The sequence spans 101 residues: Therostasin (101 aa).

The signal sequence occupies residues 1 to 19 (MRGLAVLLLVACFCSVAFG). 2 consecutive Antistasin-like domains span residues 21-46 (CENT…TCLC) and 49-75 (CNDA…FCTC).

In terms of tissue distribution, salivary glands.

The protein resides in the secreted. Potent inhibitor of factor Xa. It also inhibits trypsin in a weaker manner. The chain is Therostasin from Theromyzon tessulatum (Duck leech).